Here is a 119-residue protein sequence, read N- to C-terminus: MEKKKILDAALAPRIISGVPTDGQPLSGGPLSWAWCHTTLKRWALMKTRPYKYPLSTEPPTPPSVPNSASVNHNTTTNTTLSYTRCHSTTYTKPLRERSSRPWTRSATISRLPPRSWTN.

Positions 55-119 (LSTEPPTPPS…SRLPPRSWTN (65 aa)) are disordered. Over residues 81–92 (LSYTRCHSTTYT) the composition is skewed to polar residues.

This is an uncharacterized protein from Saccharomyces cerevisiae (strain ATCC 204508 / S288c) (Baker's yeast).